Reading from the N-terminus, the 222-residue chain is Alpha-S2-casein (222 aa).

A signal peptide spans 1-15; it reads MKFFIFTCLLAVALA. Phosphoserine is present on residues Ser-23, Ser-24, Ser-25, Ser-28, Ser-46, Ser-71, Ser-72, Ser-73, Ser-76, Ser-144, Ser-146, Ser-150, and Ser-158. The segment at residues 76 to 140 is a repeat; it reads SAEVATEEVK…AVPITPTLNR (65 aa). Residues 158–222 constitute a repeat; sequence STEVFTKKTK…TKVIPYVRYL (65 aa).

Belongs to the alpha-casein family. As to expression, mammary gland specific. Secreted in milk.

The protein resides in the secreted. Important role in the capacity of milk to transport calcium phosphate. Functionally, casocidin-I inhibits the growth of E.coli and S.carnosus. This Bos taurus (Bovine) protein is Alpha-S2-casein (CSN1S2).